The primary structure comprises 338 residues: Holliday junction branch migration complex subunit RuvB (338 aa).

Residues 4–186 (ADRLIAPDNP…FGITQRLEYY (183 aa)) form a large ATPase domain (RuvB-L) region. ATP contacts are provided by residues I25, R26, G67, K70, T71, T72, 133–135 (EDY), R176, Y186, and R223. T71 contributes to the Mg(2+) binding site. The interval 187–257 (KVEDLQNIVQ…VADKALNMLD (71 aa)) is small ATPAse domain (RuvB-S). The head domain (RuvB-H) stretch occupies residues 260-338 (AKGFDYMDRK…HFGIDKPSNR (79 aa)). Residues R296, R315, and R320 each coordinate DNA.

Belongs to the RuvB family. As to quaternary structure, homohexamer. Forms an RuvA(8)-RuvB(12)-Holliday junction (HJ) complex. HJ DNA is sandwiched between 2 RuvA tetramers; dsDNA enters through RuvA and exits via RuvB. An RuvB hexamer assembles on each DNA strand where it exits the tetramer. Each RuvB hexamer is contacted by two RuvA subunits (via domain III) on 2 adjacent RuvB subunits; this complex drives branch migration. In the full resolvosome a probable DNA-RuvA(4)-RuvB(12)-RuvC(2) complex forms which resolves the HJ.

The protein localises to the cytoplasm. The catalysed reaction is ATP + H2O = ADP + phosphate + H(+). In terms of biological role, the RuvA-RuvB-RuvC complex processes Holliday junction (HJ) DNA during genetic recombination and DNA repair, while the RuvA-RuvB complex plays an important role in the rescue of blocked DNA replication forks via replication fork reversal (RFR). RuvA specifically binds to HJ cruciform DNA, conferring on it an open structure. The RuvB hexamer acts as an ATP-dependent pump, pulling dsDNA into and through the RuvAB complex. RuvB forms 2 homohexamers on either side of HJ DNA bound by 1 or 2 RuvA tetramers; 4 subunits per hexamer contact DNA at a time. Coordinated motions by a converter formed by DNA-disengaged RuvB subunits stimulates ATP hydrolysis and nucleotide exchange. Immobilization of the converter enables RuvB to convert the ATP-contained energy into a lever motion, pulling 2 nucleotides of DNA out of the RuvA tetramer per ATP hydrolyzed, thus driving DNA branch migration. The RuvB motors rotate together with the DNA substrate, which together with the progressing nucleotide cycle form the mechanistic basis for DNA recombination by continuous HJ branch migration. Branch migration allows RuvC to scan DNA until it finds its consensus sequence, where it cleaves and resolves cruciform DNA. This is Holliday junction branch migration complex subunit RuvB from Vibrio atlanticus (strain LGP32) (Vibrio splendidus (strain Mel32)).